We begin with the raw amino-acid sequence, 1470 residues long: Collagen alpha-1(XVII) chain (1470 aa).

Disordered regions lie at residues 1–155, 167–193, and 422–452; these read MDVT…PSTR, KGSRSASASPTRNTSNTLPIPKKGTVE, and SAENHGYDRGGGGGRGKGGGAGGGGGGGGAS. The Cytoplasmic portion of the chain corresponds to 1–476; it reads MDVTKKSKRD…CGSCCSWWKW (476 aa). The tract at residues 1–573 is nonhelical region (NC16); the sequence is MDVTKKSKRD…MTEQENGNLR (573 aa). Residues 9–19 show a composition bias toward basic and acidic residues; the sequence is RDGTEVTERIV. A compositionally biased stretch (low complexity) spans 60-74; that stretch reads GSSGYINSSGSIRGN. 3 stretches are compositionally biased toward polar residues: residues 75–96, 111–120, and 170–184; these read ASTSSYRRTHSPASTLPNSPGS, EGSSSGNSSP, and RSASASPTRNTSNTL. Positions 146 to 231 are necessary for interaction with DST and for the recruitment of DST to hemidesmosome; that stretch reads RLQSASPSTR…WSSTLPAGSS (86 aa). A compositionally biased stretch (gly residues) spans 430 to 452; that stretch reads RGGGGGRGKGGGAGGGGGGGGAS. The chain crosses the membrane as a helical; Signal-anchor for type II membrane protein span at residues 477-497; that stretch reads LLGLLLTWLLLLGLLFGLIAL. The Extracellular portion of the chain corresponds to 498–1470; it reads AEEVRKLKAR…RRKRSIAIKP (973 aa). Ser551 carries the phosphoserine; by CK2 modification. Disordered stretches follow at residues 568-873, 885-999, 1159-1181, 1194-1220, and 1249-1298; these read ENGN…FLSS, GVDL…SSSG, DYRNIIGPPGPPGPPGMPGNAWS, TAGLSSIPGPPGPPGPPGPRGPPGVSA, and FIVG…TNGG. A triple-helical region region spans residues 574–1456; sequence GSPGPKGDMG…KGEKGDKGDQ (883 aa). A compositionally biased stretch (pro residues) spans 597-609; it reads PGIPGPLGHPGPE. Composition is skewed to low complexity over residues 742–755 and 781–803; these read EPGAKGAMGPAGAD and DPGKPGLTGPQGPQGLPGSPGRP. Positions 827 to 848 are enriched in pro residues; the sequence is PGPPGPPGAMGPPGPPGTPGPA. The span at 850 to 873 shows a compositional bias: low complexity; it reads PAGLPGQQGPRGEPGLAGDSFLSS. 6 stretches are compositionally biased toward pro residues: residues 891 to 914, 940 to 949, 982 to 992, 1166 to 1175, 1201 to 1215, and 1253 to 1262; these read PPGPPGPRGPPGPSIPGPPGPRGP, PPGPPGPPGP, PPGPPGPPGPP, PPGPPGPPGM, PGPPGPPGPPGPRGP, and PPGPPGPQGP. N-linked (GlcNAc...) asparagine glycosylation occurs at Asn1273. The segment covering 1275–1290 has biased composition (low complexity); sequence SSNSSARRGTSYSSST. The N-linked (GlcNAc...) asparagine glycan is linked to Asn1395. The disordered stretch occupies residues 1406–1470; it reads TYGTIPGPPG…RRKRSIAIKP (65 aa). The span at 1434–1443 shows a compositional bias: pro residues; it reads PRGPPGPPGP. The segment covering 1446–1455 has biased composition (basic and acidic residues); sequence NKGEKGDKGD. Positions 1457–1470 are nonhelical region (NC1); sequence VYTGRRKRSIAIKP. Positions 1460 to 1470 are enriched in basic residues; it reads GRRKRSIAIKP.

Homotrimers of alpha 1(XVII)chains. Interacts (via cytoplasmic region) with ITGB4 (via cytoplasmic region). Interacts (via cytoplasmic region) with DST (via N-terminus). Interacts (via N-terminus) with PLEC. Interacts (via cytoplasmic region) with DSP. In terms of processing, the intracellular/endo domain is disulfide-linked. Post-translationally, prolines at the third position of the tripeptide repeating unit (G-X-Y) are hydroxylated in some or all of the chains. The ectodomain is shedded from the surface of keratinocytes resulting in a 120-kDa soluble form, also named as 120 kDa linear IgA disease antigen homolog. The shedding is mediated by membrane-bound metalloproteases. This cleavage is inhibited by phosphorylation at Ser-551.

The protein resides in the cell junction. It is found in the hemidesmosome. The protein localises to the membrane. Its subcellular location is the secreted. It localises to the extracellular space. The protein resides in the extracellular matrix. It is found in the basement membrane. In terms of biological role, may play a role in the integrity of hemidesmosome and the attachment of basal keratinocytes to the underlying basement membrane. Its function is as follows. The 120 kDa linear IgA disease antigen homolog is an anchoring filament component involved in dermal-epidermal cohesion. In Mus musculus (Mouse), this protein is Collagen alpha-1(XVII) chain (Col17a1).